The chain runs to 439 residues: Probable N-acetylmuramidase (439 aa).

The N-terminal stretch at methionine 1 to alanine 57 is a signal peptide. 2 disordered regions span residues serine 218–threonine 241 and serine 287–glutamine 320. Residues threonine 241–leucine 284 enclose the LysM 1 domain. A compositionally biased stretch (low complexity) spans serine 287–serine 319. The 44-residue stretch at threonine 321 to valine 364 folds into the LysM 2 domain. The segment at serine 372 to asparagine 393 is disordered. The 44-residue stretch at serine 395–isoleucine 438 folds into the LysM 3 domain.

This sequence belongs to the glycosyl hydrolase 73 family.

It localises to the secreted. The catalysed reaction is Hydrolysis of (1-&gt;4)-beta-linkages between N-acetylmuramic acid and N-acetyl-D-glucosamine residues in a peptidoglycan and between N-acetyl-D-glucosamine residues in chitodextrins.. Functionally, required for cell separation during growth. The chain is Probable N-acetylmuramidase (acmA) from Lactococcus lactis subsp. lactis (strain IL1403) (Streptococcus lactis).